An 86-amino-acid chain; its full sequence is Defensin-like protein a (86 aa).

An N-terminal signal peptide occupies residues 1 to 23 (MRCSVLFVVSYVIMSLLISHVQG). Cystine bridges form between C33–C81, C43–C67, C51–C76, and C65–C78.

It belongs to the DEFL family. Expressed specifically in anthers.

Its subcellular location is the secreted. Functionally, involved in self-incompatibility. In Arabidopsis lyrata (Lyre-leaved rock-cress), this protein is Defensin-like protein a (SCRa).